A 212-amino-acid chain; its full sequence is MLTAIIDYESGNLHSAEKAFQRMARETGAGEVVVTSDADLVARADRLVLPGDGAFPACAAELRGHKGLYDAMVEAVEQKGRPFLGICVGMQLMATTGHEYEETPGLGWVAGDVVRITPENAALKVPHMGWNDLVIEAAHPIFDGIAGGDHVYFVHSYHFRVTNPTERLAHVDYGGPVTAVVGRDTMVGLQFHPEKSQAIGLRMIGNFLTWTP.

The Glutamine amidotransferase type-1 domain occupies 2 to 212 (LTAIIDYESG…MIGNFLTWTP (211 aa)). Catalysis depends on C87, which acts as the Nucleophile. Residues H192 and E194 contribute to the active site.

Heterodimer of HisH and HisF.

It localises to the cytoplasm. The catalysed reaction is 5-[(5-phospho-1-deoxy-D-ribulos-1-ylimino)methylamino]-1-(5-phospho-beta-D-ribosyl)imidazole-4-carboxamide + L-glutamine = D-erythro-1-(imidazol-4-yl)glycerol 3-phosphate + 5-amino-1-(5-phospho-beta-D-ribosyl)imidazole-4-carboxamide + L-glutamate + H(+). It carries out the reaction L-glutamine + H2O = L-glutamate + NH4(+). Its pathway is amino-acid biosynthesis; L-histidine biosynthesis; L-histidine from 5-phospho-alpha-D-ribose 1-diphosphate: step 5/9. Functionally, IGPS catalyzes the conversion of PRFAR and glutamine to IGP, AICAR and glutamate. The HisH subunit catalyzes the hydrolysis of glutamine to glutamate and ammonia as part of the synthesis of IGP and AICAR. The resulting ammonia molecule is channeled to the active site of HisF. The chain is Imidazole glycerol phosphate synthase subunit HisH from Ruegeria pomeroyi (strain ATCC 700808 / DSM 15171 / DSS-3) (Silicibacter pomeroyi).